A 1040-amino-acid chain; its full sequence is FHF complex subunit HOOK-interacting protein 1A (1040 aa).

Disordered stretches follow at residues 555-613 (PQQL…PIDP), 653-746 (SEDM…AAHP), and 769-808 (LMEQ…EDEE). Basic and acidic residues predominate over residues 653–664 (SEDMKDSQEEAA). Over residues 677–690 (VPINNGPLLSTQPE) the composition is skewed to polar residues. 2 stretches are compositionally biased toward basic and acidic residues: residues 696 to 719 (EWNR…REPE) and 783 to 804 (TKEE…KKEL).

It belongs to the FHIP family. As to quaternary structure, may be a component of the FTS/Hook/FHIP complex (FHF complex), composed of AKTIP/FTS, FHIP1B, and one or more members of the Hook family of proteins HOOK1, HOOK2, and HOOK3. May interact directly with AKTIP/FTS.

In terms of biological role, probable component of the FTS/Hook/FHIP complex (FHF complex). FHF complex promotes the distribution of AP-4 complex to the perinuclear area of the cell. This Homo sapiens (Human) protein is FHF complex subunit HOOK-interacting protein 1A.